Reading from the N-terminus, the 383-residue chain is Probable endoplasmic reticulum-Golgi intermediate compartment protein 3 (383 aa).

Topologically, residues 1–26 (MLISQLKKFDAYPKTVDDFRVKTYTG) are cytoplasmic. A helical transmembrane segment spans residues 27-47 (AIVSIIGGVFILWLFFSQVTL). Residues 48 to 347 (YFSTDIHHEL…GKSFASFLTN (300 aa)) are Lumenal-facing. A helical membrane pass occupies residues 348–368 (VCAIIGGVFTVFGIFDSFIYY). Topologically, residues 369–383 (STKNLQKKIDLGKTF) are cytoplasmic.

Belongs to the ERGIC family.

Its subcellular location is the endoplasmic reticulum-Golgi intermediate compartment membrane. The protein localises to the golgi apparatus. It localises to the cis-Golgi network membrane. It is found in the endoplasmic reticulum membrane. In terms of biological role, possible role in transport between endoplasmic reticulum and Golgi. This Dictyostelium discoideum (Social amoeba) protein is Probable endoplasmic reticulum-Golgi intermediate compartment protein 3 (ergic3).